Here is a 396-residue protein sequence, read N- to C-terminus: Flavohemoprotein (396 aa).

One can recognise a Globin domain in the interval 1–136 (MLDTQTIAIV…LADVFIQRES (136 aa)). Histidine 85 is a binding site for heme b. Active-site charge relay system residues include tyrosine 95 and glutamate 135. Positions 147–396 (GGWRTLRRFR…YECFGPHKVI (250 aa)) are reductase. The FAD-binding FR-type domain occupies 150 to 255 (RTLRRFRIIK…APPRGDFFLD (106 aa)). FAD-binding positions include tyrosine 188 and 204–207 (RQYS). 268–273 (GVGQTP) serves as a coordination point for NADP(+). 389–392 (CFGP) contributes to the FAD binding site.

This sequence belongs to the globin family. Two-domain flavohemoproteins subfamily. In the C-terminal section; belongs to the flavoprotein pyridine nucleotide cytochrome reductase family. Heme b serves as cofactor. FAD is required as a cofactor.

The catalysed reaction is 2 nitric oxide + NADPH + 2 O2 = 2 nitrate + NADP(+) + H(+). The enzyme catalyses 2 nitric oxide + NADH + 2 O2 = 2 nitrate + NAD(+) + H(+). Is involved in NO detoxification in an aerobic process, termed nitric oxide dioxygenase (NOD) reaction that utilizes O(2) and NAD(P)H to convert NO to nitrate, which protects the bacterium from various noxious nitrogen compounds. Therefore, plays a central role in the inducible response to nitrosative stress. The polypeptide is Flavohemoprotein (Yersinia pestis).